Here is a 274-residue protein sequence, read N- to C-terminus: MEALRQRIETAFENRQHITPGTVEPSLRADVETVIAMLDKGEARVAEKINGQWQVHQWLKKAVLLSFRIFDNGVIDGGDTKYFDKVPQKFADYDEARFKAEAIRVVPPATVRKGSFIGKNTVLMPSYVNLGAYVDEGTMVDTWATVGSCAQIGKNVHLSGGVGIGGVLEPLQAGPTIIEDNCFIGARSEIVEGVVVEEGSVISMGVYIGQSTRIFDRETGEVHYGRVPAGSVVVSGNLPSACGKYSLYAAIIVKKVDAKTRAKVGINELLRIVD.

Substrate-binding residues include Arg-104 and Asp-141.

This sequence belongs to the transferase hexapeptide repeat family. In terms of assembly, homotrimer.

The protein resides in the cytoplasm. It catalyses the reaction (S)-2,3,4,5-tetrahydrodipicolinate + succinyl-CoA + H2O = (S)-2-succinylamino-6-oxoheptanedioate + CoA. It functions in the pathway amino-acid biosynthesis; L-lysine biosynthesis via DAP pathway; LL-2,6-diaminopimelate from (S)-tetrahydrodipicolinate (succinylase route): step 1/3. This Shewanella denitrificans (strain OS217 / ATCC BAA-1090 / DSM 15013) protein is 2,3,4,5-tetrahydropyridine-2,6-dicarboxylate N-succinyltransferase.